The following is a 308-amino-acid chain: Probable inositol oxygenase (308 aa).

Substrate is bound by residues R49 and 106–108 (DDS). Positions 119, 144, and 145 each coordinate Fe cation. Substrate contacts are provided by residues K148 and 165–166 (GD). Fe cation contacts are provided by H217, H243, and D276. Residue 243–244 (HS) coordinates substrate.

The protein belongs to the myo-inositol oxygenase family. It depends on Fe cation as a cofactor.

The protein resides in the cytoplasm. The catalysed reaction is myo-inositol + O2 = D-glucuronate + H2O + H(+). Its pathway is polyol metabolism; myo-inositol degradation into D-glucuronate; D-glucuronate from myo-inositol: step 1/1. In terms of biological role, involved in the biosynthesis of UDP-glucuronic acid (UDP-GlcA), providing nucleotide sugars for cell-wall polymers. May be also involved in plant ascorbate biosynthesis. The sequence is that of Probable inositol oxygenase from Oryza sativa subsp. japonica (Rice).